The chain runs to 83 residues: Hainantoxin-III 6 (83 aa).

Positions 1 to 21 are cleaved as a signal peptide; it reads MKASMFLALAGLVLLFVVGYA. Positions 22–48 are excised as a propeptide; that stretch reads SESEEKESPRELLSKIFAVDDFKGEER. Intrachain disulfides connect Cys-50–Cys-65, Cys-57–Cys-70, and Cys-64–Cys-77. Leu-81 is subject to Leucine amide.

The protein belongs to the neurotoxin 10 (Hwtx-1) family. 15 (Hntx-3) subfamily. As to quaternary structure, monomer. Expressed by the venom gland.

The protein resides in the secreted. Its function is as follows. Selective antagonist of neuronal tetrodotoxin (TTX)-sensitive voltage-gated sodium channels (IC(50)=1270 nM on Nav1.1/SCN1A, 270 nM on Nav1.2/SCN2A, 491 nM on Nav1.3/SCN3A and 232 nM on Nav1.7/SCN9A). This toxin suppress Nav1.7 current amplitude without significantly altering the activation, inactivation, and repriming kinetics. Short extreme depolarizations partially activate the toxin-bound channel, indicating voltage-dependent inhibition of this toxin. This toxin increases the deactivation of the Nav1.7 current after extreme depolarizations. The toxin-Nav1.7 complex is gradually dissociated upon prolonged strong depolarizations in a voltage-dependent manner, and the unbound toxin rebinds to Nav1.7 after a long repolarization. Moreover, analysis of chimeric channels showed that the DIIS3-S4 linker is critical for toxin binding to Nav1.7. These data are consistent with this toxin interacting with Nav1.7 site 4 and trapping the domain II voltage sensor in the closed state. The sequence is that of Hainantoxin-III 6 from Cyriopagopus hainanus (Chinese bird spider).